A 156-amino-acid chain; its full sequence is Zinc metalloproteinase-disintegrin jararin (156 aa).

The Peptidase M12B domain maps to 1 to 67 (FVANRMAHEL…NYYGCLLNEP (67 aa)). Residue histidine 8 coordinates Zn(2+). Glutamate 9 is an active-site residue. Histidine 12 is a binding site for Zn(2+). 9 cysteine pairs are disulfide-bonded: cysteine 23-cysteine 47, cysteine 25-cysteine 30, cysteine 78-cysteine 97, cysteine 89-cysteine 107, cysteine 91-cysteine 102, cysteine 101-cysteine 124, cysteine 115-cysteine 121, cysteine 120-cysteine 145, and cysteine 133-cysteine 152. Residues 75–156 (PPFCGNYYPE…GQSGDCPRNS (82 aa)) enclose the Disintegrin domain. Basic and acidic residues predominate over residues 136-145 (GRGDNPDDRC). The disordered stretch occupies residues 136-156 (GRGDNPDDRCTGQSGDCPRNS). The short motif at 137 to 139 (RGD) is the Cell attachment site element. Residues 146 to 156 (TGQSGDCPRNS) show a composition bias toward polar residues.

Belongs to the venom metalloproteinase (M12B) family. P-II subfamily. P-IIb sub-subfamily. Monomer. Requires Zn(2+) as cofactor. As to expression, expressed by the venom gland.

The protein resides in the secreted. Its function is as follows. Snake venom zinc metalloproteinase that inhibits ADP-induced platelet aggregation (probably by binding integrin alpha-IIb/beta-3 (ITGA2B/ITGB3)) and degrades fibrinogen. The polypeptide is Zinc metalloproteinase-disintegrin jararin (Bothrops jararaca (Jararaca)).